A 317-amino-acid chain; its full sequence is L-lactate dehydrogenase (317 aa).

Residues Val16, Asp37, Lys42, Tyr68, and 82-83 (GA) each bind NAD(+). Residues Gln85 and Arg91 each coordinate substrate. NAD(+)-binding positions include Thr104, 121-123 (ATN), and Ser146. 123-126 (NPVD) is a substrate binding site. Residue 151–154 (DTAR) participates in substrate binding. Arg156 and His171 together coordinate beta-D-fructose 1,6-bisphosphate. His178 (proton acceptor) is an active-site residue. Phosphotyrosine is present on Tyr222. Substrate is bound at residue Thr231.

This sequence belongs to the LDH/MDH superfamily. LDH family. In terms of assembly, homotetramer.

The protein resides in the cytoplasm. It carries out the reaction (S)-lactate + NAD(+) = pyruvate + NADH + H(+). It participates in fermentation; pyruvate fermentation to lactate; (S)-lactate from pyruvate: step 1/1. With respect to regulation, allosterically activated by fructose 1,6-bisphosphate (FBP). Its function is as follows. Catalyzes the conversion of lactate to pyruvate. This Corynebacterium efficiens (strain DSM 44549 / YS-314 / AJ 12310 / JCM 11189 / NBRC 100395) protein is L-lactate dehydrogenase.